We begin with the raw amino-acid sequence, 363 residues long: Cyanuric acid amidohydrolase (363 aa).

The segment at 1-103 (MKTRVTRLTV…LVFEVDDSAP (103 aa)) is RU A. Residues arginine 51 and 82–83 (SG) each bind substrate. An RU B region spans residues 111 to 247 (GLAAGVAFTR…NEVLVLGNAP (137 aa)). Lysine 161 is an active-site residue. Substrate is bound by residues arginine 193 and 230-231 (SA). Serine 230 serves as the catalytic Nucleophile. The RU C stretch occupies residues 253-363 (YRIGHAVMED…GGPLALIVRS (111 aa)). Residue glutamate 297 participates in Mg(2+) binding. Substrate is bound by residues arginine 324 and 343–344 (SG). Mg(2+)-binding residues include alanine 346, glutamine 349, glycine 350, proline 351, and glycine 354.

Belongs to the cyclic amide hydrolase (CyAH) family. In terms of assembly, homotetramer.

The catalysed reaction is cyanurate + H2O = 1-carboxybiuret + H(+). It participates in xenobiotic degradation; atrazine degradation; biuret from cyanurate: step 1/1. With respect to regulation, inhibited by barbituric acid. Its function is as follows. Responsible for the hydrolysis of cyanuric acid, an intermediate formed during catabolism of s-triazine based compounds in herbicides such as atrazine and polymers such as melamine. Catalyzes the hydrolytic opening of the s-triazine ring of cyanuric acid (2,4,6-trihydroxy-s-triazine) to yield carbon dioxide and carboxybiuret, which spontaneously decarboxylates to biuret. This chain is Cyanuric acid amidohydrolase, found in Ectopseudomonas oleovorans (strain CECT 5344) (Pseudomonas pseudoalcaligenes).